Reading from the N-terminus, the 947-residue chain is Protocadherin alpha-4 (947 aa).

The N-terminal stretch at 1 to 29 is a signal peptide; the sequence is MEFSWGSGQESRRLLLLLLLLSAWEAGNG. 6 consecutive Cadherin domains span residues 30–133, 134–242, 243–350, 351–455, 456–565, and 588–678; these read QLHY…PPVF, PATQ…APAF, DRTI…VPDL, EFKS…APAF, AQPE…APAL, and DHVV…APKA. Residues 30–697 lie on the Extracellular side of the membrane; it reads QLHYSVSEEA…GPDAALVDVN (668 aa). C96 and C102 are disulfide-bonded. Residues N139, N257, and N265 are each glycosylated (N-linked (GlcNAc...) asparagine). A glycan (N-linked (GlcNAc...) asparagine) is linked at N548. The chain crosses the membrane as a helical span at residues 698 to 718; it reads VYLIIAICAVSSLLVLTLLLY. Residues 719-947 lie on the Cytoplasmic side of the membrane; sequence TALRCSAPPT…GNSTTDNSDQ (229 aa). 6 PXXP repeats span residues 734 to 737, 774 to 777, 796 to 799, 829 to 832, 870 to 873, and 888 to 891; these read PGKP, PSLP, PRQP, PGGP, PGNP, and PGSP. The tract at residues 734–891 is 6 X 4 AA repeats of P-X-X-P; sequence PGKPTLVCSS…PDKFIIPGSP (158 aa). Residues 738-947 form a required for interaction with FYN region; it reads TLVCSSAVGS…GNSTTDNSDQ (210 aa). 2 disordered regions span residues 754–805 and 828–853; these read RRPR…DWRY and GPGGPDQQWPTVSSATPEPEAGEVSP. Residues 892 to 947 are disordered; that stretch reads AIISIRQEPANSQIDKSDFITFGKKEETKKKKKKKKGNKTQEKKEKGNSTTDNSDQ. Basic and acidic residues predominate over residues 906-920; it reads DKSDFITFGKKEETK.

As to quaternary structure, forms homodimers in trans (molecules expressed by two different cells). Forms promiscuous heterodimers in cis (at the plasma membrane of the same cell) with other protocadherins. Interacts with FYN.

Its subcellular location is the cell membrane. Calcium-dependent cell-adhesion protein involved in cells self-recognition and non-self discrimination. Thereby, it is involved in the establishment and maintenance of specific neuronal connections in the brain. The protein is Protocadherin alpha-4 of Pan troglodytes (Chimpanzee).